The primary structure comprises 336 residues: MRAAVVTKDHKVSIEDKKLRALKPGEALVQTEYCGVCHTDLHVKNADFGDVTGVTLGHEGIGKVIEVAEDVESLKIGDRVSIAWMFESCGRCEYCTTGRETLCRSVKNAGYTVDGAMAEQVIVTADYAVKVPEKLDPAAASSITCAGVTTYKAVKVSNVKPGQWLGVFGIGGLGNLALQYAKNVMGAKIVAFDINDDKLAFAKELGADAIINSKDVDPVAEVMKLTDNKGLDATVVTSVAKTPFNQAVDVVKAGARVVAVGLPVDKMNLDIPRLVLDGIEVVGSLVGTRQDLREAFEFAAENKVTPKVQLRKLEEINDIFEEMENGTITGRMVIKF.

Zn(2+) contacts are provided by C37, H58, C89, C92, C95, C103, and C145.

Belongs to the zinc-containing alcohol dehydrogenase family. Requires Zn(2+) as cofactor.

The catalysed reaction is a primary alcohol + NAD(+) = an aldehyde + NADH + H(+). The enzyme catalyses a secondary alcohol + NAD(+) = a ketone + NADH + H(+). The sequence is that of Alcohol dehydrogenase (adh) from Staphylococcus aureus (strain USA300).